Consider the following 830-residue polypeptide: Kinesin-like protein KIN-14B (830 aa).

A coiled-coil region spans residues 56–97 (ENISDDNTESEAKVQKIQDELVSLNAQLKQITLQRREALNNY). Positions 103–425 (NIRVFCRIRP…LGFATRVRSI (323 aa)) constitute a Kinesin motor domain. Residue 182–189 (GQTGSGKT) participates in ATP binding. The stretch at 434 to 476 (EMKARKETLLIDLGQKVNDLEHECEDIRRKIKNLEESMEHLTG) forms a coiled coil.

This sequence belongs to the TRAFAC class myosin-kinesin ATPase superfamily. Kinesin family. KIN-14 subfamily.

The protein is Kinesin-like protein KIN-14B of Oryza sativa subsp. japonica (Rice).